We begin with the raw amino-acid sequence, 42 residues long: Fungal defensin eurocin (42 aa).

Beta-D-GlcNAc-(1-&gt;4)-Mur2Ac(oyl-L-Ala-gamma-D-Glu-L-Lys-D-Ala-D-Ala)-di-trans,octa-cis-undecaprenyl diphosphate contacts are provided by F2, G3, C4, and H14. 3 cysteine pairs are disulfide-bonded: C4-C27, C11-C38, and C15-C40. Residues W31 to H35 are interaction site with membranes lipids. Beta-D-GlcNAc-(1-&gt;4)-Mur2Ac(oyl-L-Ala-gamma-D-Glu-L-Lys-D-Ala-D-Ala)-di-trans,octa-cis-undecaprenyl diphosphate is bound at residue C38.

Belongs to the invertebrate defensin family.

It is found in the secreted. The protein localises to the target cell membrane. Antimicrobial peptide that acts against Gram-positive bacteria but not against Gram-negative bacteria. It selectively inhibits peptidoglycan biosynthesis through complex formation with the cell wall precursor lipid II (1:1 molar ratio) thus inhibiting cell wall synthesis. It does not disrupt cell membranes. In vivo, is effective against an intraperitoneal infection with S.pneumoniae. In vitro, it shows very low hemolytic and cytolytic activities. The sequence is that of Fungal defensin eurocin from Aspergillus amstelodami.